The primary structure comprises 461 residues: Growth/differentiation factor 7 (461 aa).

The N-terminal stretch at 1–19 (MDLSAAAALCLWLLSACRP) is a signal peptide. Positions 20–315 (RDGLEAAAVL…ANLGGRRRRR (296 aa)) are excised as a propeptide. N-linked (GlcNAc...) asparagine glycosylation occurs at Asn79. Residues 287-360 (LRAAAEPPPD…GHGRRGRSRC (74 aa)) are disordered. Positions 323–350 (GAQGSGGGGGGGGGGGGGGGGGGGGAGR) are enriched in gly residues. The span at 351 to 360 (GHGRRGRSRC) shows a compositional bias: basic residues. Disulfide bonds link Cys360–Cys426, Cys389–Cys458, and Cys393–Cys460.

This sequence belongs to the TGF-beta family. Homodimer; disulfide-linked.

The protein resides in the secreted. This is Growth/differentiation factor 7 (Gdf7) from Mus musculus (Mouse).